We begin with the raw amino-acid sequence, 166 residues long: Large ribosomal subunit protein uL10 (166 aa).

This sequence belongs to the universal ribosomal protein uL10 family. Part of the ribosomal stalk of the 50S ribosomal subunit. The N-terminus interacts with L11 and the large rRNA to form the base of the stalk. The C-terminus forms an elongated spine to which L12 dimers bind in a sequential fashion forming a multimeric L10(L12)X complex.

Forms part of the ribosomal stalk, playing a central role in the interaction of the ribosome with GTP-bound translation factors. This is Large ribosomal subunit protein uL10 from Marinomonas sp. (strain MWYL1).